We begin with the raw amino-acid sequence, 125 residues long: Large ribosomal subunit protein bL20 (125 aa).

Belongs to the bacterial ribosomal protein bL20 family.

Its function is as follows. Binds directly to 23S ribosomal RNA and is necessary for the in vitro assembly process of the 50S ribosomal subunit. It is not involved in the protein synthesizing functions of that subunit. The polypeptide is Large ribosomal subunit protein bL20 (Methylobacterium radiotolerans (strain ATCC 27329 / DSM 1819 / JCM 2831 / NBRC 15690 / NCIMB 10815 / 0-1)).